Here is a 387-residue protein sequence, read N- to C-terminus: Large ribosomal subunit protein uL3 (387 aa).

This sequence belongs to the universal ribosomal protein uL3 family.

The protein resides in the cytoplasm. In Candida glabrata (strain ATCC 2001 / BCRC 20586 / JCM 3761 / NBRC 0622 / NRRL Y-65 / CBS 138) (Yeast), this protein is Large ribosomal subunit protein uL3 (RPL3).